A 340-amino-acid polypeptide reads, in one-letter code: DNA-directed RNA polymerase subunit alpha (340 aa).

Residues 1–233 (MIQDEIKVST…DLFIPLINSE (233 aa)) form an alpha N-terminal domain (alpha-NTD) region. An alpha C-terminal domain (alpha-CTD) region spans residues 265 to 340 (TKDVAFKHIF…IQLPKNKNYL (76 aa)).

This sequence belongs to the RNA polymerase alpha chain family. As to quaternary structure, in plastids the minimal PEP RNA polymerase catalytic core is composed of four subunits: alpha, beta, beta', and beta''. When a (nuclear-encoded) sigma factor is associated with the core the holoenzyme is formed, which can initiate transcription.

The protein localises to the plastid. It localises to the chloroplast. It catalyses the reaction RNA(n) + a ribonucleoside 5'-triphosphate = RNA(n+1) + diphosphate. DNA-dependent RNA polymerase catalyzes the transcription of DNA into RNA using the four ribonucleoside triphosphates as substrates. The sequence is that of DNA-directed RNA polymerase subunit alpha from Marchantia polymorpha (Common liverwort).